The following is a 747-amino-acid chain: Beta-glucosidase BoGH3A (747 aa).

A signal peptide spans 1–26 (MIIGIMKTFLLTICFLSVQTGMVAIA). Aspartate 273 is an active-site residue.

Belongs to the glycosyl hydrolase 3 family.

It localises to the periplasm. The catalysed reaction is Hydrolysis of terminal, non-reducing beta-D-glucosyl residues with release of beta-D-glucose.. It participates in glucan metabolism; xyloglucan degradation. Catalyzes the hydrolysis of terminal, non-reducing beta-D-glucosyl residues with release of beta-D-glucose in xyloglucan degradation, leading to remove the backbone 'G' units. This Bacteroides ovatus (strain ATCC 8483 / DSM 1896 / JCM 5824 / BCRC 10623 / CCUG 4943 / NCTC 11153) protein is Beta-glucosidase BoGH3A.